Here is a 142-residue protein sequence, read N- to C-terminus: FAD synthase (142 aa).

Residues Thr-9–Phe-10, His-14–His-17, and Asp-92 contribute to the ATP site.

It belongs to the archaeal FAD synthase family. Homodimer. A divalent metal cation is required as a cofactor.

The enzyme catalyses FMN + ATP + H(+) = FAD + diphosphate. Its pathway is cofactor biosynthesis; FAD biosynthesis; FAD from FMN: step 1/1. Catalyzes the transfer of the AMP portion of ATP to flavin mononucleotide (FMN) to produce flavin adenine dinucleotide (FAD) coenzyme. This Halalkalicoccus jeotgali (strain DSM 18796 / CECT 7217 / JCM 14584 / KCTC 4019 / B3) protein is FAD synthase.